The chain runs to 189 residues: GTPase NRas (189 aa).

10 to 17 (GAGGVGKS) lines the GTP pocket. The Effector region motif lies at 32 to 40 (YDPTIEDSY). GTP is bound by residues 57–61 (DTAGQ) and 116–119 (NKCD). Positions 166 to 185 (YRMKKLNSNEDGNQGCMGLS) are hypervariable region. The S-palmitoyl cysteine moiety is linked to residue cysteine 181. A lipid anchor (S-farnesyl cysteine) is attached at cysteine 186. The propeptide at 187 to 189 (IVM) is removed in mature form.

Belongs to the small GTPase superfamily. Ras family. In terms of processing, palmitoylated by the ZDHHC9-GOLGA7 complex. Depalmitoylated by ABHD17A, ABHD17B and ABHD17C. A continuous cycle of de- and re-palmitoylation regulates rapid exchange between plasma membrane and Golgi.

Its subcellular location is the cell membrane. It localises to the golgi apparatus membrane. The enzyme catalyses GTP + H2O = GDP + phosphate + H(+). Its activity is regulated as follows. Alternates between an inactive form bound to GDP and an active form bound to GTP. Activated by a guanine nucleotide-exchange factor (GEF) and inactivated by a GTPase-activating protein (GAP). Its function is as follows. Ras proteins bind GDP/GTP and possess intrinsic GTPase activity. The protein is GTPase NRas (NRAS) of Gallus gallus (Chicken).